The chain runs to 679 residues: Probable metal-nicotianamine transporter YSL18 (679 aa).

Over residues 1-17 (MESVGDPRDGPSTERAF) the composition is skewed to basic and acidic residues. The interval 1–21 (MESVGDPRDGPSTERAFEGQP) is disordered. Helical transmembrane passes span 29–49 (VTLR…SVMM), 51–71 (LVFT…LGFF), 101–121 (CVVA…LLAM), 144–164 (FGRM…AIVP), 211–231 (LASL…NCGF), 255–275 (VGIG…GSII), 309–329 (VFCA…AISL), 379–399 (FAIS…PLMY), 407–427 (VAAA…GTGV), 441–461 (ILMF…SLVI), 497–517 (VIGT…FHHF), 547–567 (LPKY…AVCA), 593–613 (FLLV…VFLW), and 627–647 (VLAS…ALLA).

This sequence belongs to the YSL (TC 2.A.67.2) family.

The protein localises to the membrane. Its function is as follows. May be involved in the transport of nicotianamine-chelated metals. In Oryza sativa subsp. japonica (Rice), this protein is Probable metal-nicotianamine transporter YSL18 (YSL18).